A 205-amino-acid polypeptide reads, in one-letter code: 3-demethoxyubiquinol 3-hydroxylase (205 aa).

The Fe cation site is built by Glu-54, Glu-84, His-87, Glu-136, Glu-168, and His-171.

The protein belongs to the COQ7 family. The cofactor is Fe cation.

It localises to the cell membrane. It carries out the reaction a 5-methoxy-2-methyl-3-(all-trans-polyprenyl)benzene-1,4-diol + AH2 + O2 = a 3-demethylubiquinol + A + H2O. Its pathway is cofactor biosynthesis; ubiquinone biosynthesis. In terms of biological role, catalyzes the hydroxylation of 2-nonaprenyl-3-methyl-6-methoxy-1,4-benzoquinol during ubiquinone biosynthesis. The polypeptide is 3-demethoxyubiquinol 3-hydroxylase (Acidovorax sp. (strain JS42)).